Reading from the N-terminus, the 71-residue chain is uncharacterized protein (71 aa).

A signal peptide spans Met1–Ser19.

This is an uncharacterized protein from Pasteurella multocida (strain Pm70).